Here is a 147-residue protein sequence, read N- to C-terminus: Small ribosomal subunit protein bS6 (147 aa).

The tract at residues 96 to 147 (VTEPSPMMKAKEERFTKRDDREERSDRSEAPRAEAPAKAEAPAKAEDEAAAE) is disordered. Positions 104-147 (KAKEERFTKRDDREERSDRSEAPRAEAPAKAEAPAKAEDEAAAE) are enriched in basic and acidic residues.

This sequence belongs to the bacterial ribosomal protein bS6 family.

Its function is as follows. Binds together with bS18 to 16S ribosomal RNA. The polypeptide is Small ribosomal subunit protein bS6 (Photobacterium profundum (strain SS9)).